The following is a 431-amino-acid chain: Tol-Pal system protein TolB (431 aa).

A signal peptide spans 1-26 (MSLMTKLGFRALVASCLIAAGGAANA). Residues 411–431 (PQILSVQGGSVREPSWGPFMQ) form a disordered region.

This sequence belongs to the TolB family. As to quaternary structure, the Tol-Pal system is composed of five core proteins: the inner membrane proteins TolA, TolQ and TolR, the periplasmic protein TolB and the outer membrane protein Pal. They form a network linking the inner and outer membranes and the peptidoglycan layer.

The protein localises to the periplasm. Part of the Tol-Pal system, which plays a role in outer membrane invagination during cell division and is important for maintaining outer membrane integrity. This Burkholderia vietnamiensis (strain G4 / LMG 22486) (Burkholderia cepacia (strain R1808)) protein is Tol-Pal system protein TolB.